The following is a 261-amino-acid chain: Cytochrome c oxidase subunit 3 (261 aa).

Over 1–15 the chain is Mitochondrial matrix; sequence MTHQTHAYHMVNPSP. A helical membrane pass occupies residues 16–34; that stretch reads WPLTGALSALLMTSGLVMW. Over 35-40 the chain is Mitochondrial intermembrane; sequence FHYHST. The chain crosses the membrane as a helical span at residues 41-66; it reads ILVLLGLLTNILTMYQWWRDVVREGT. The Mitochondrial matrix segment spans residues 67 to 72; that stretch reads FQGHHT. A helical transmembrane segment spans residues 73–105; it reads PTVQKGLRYGMVLFIISEVFFFAGFFWAFYHSS. Residues 106-128 lie on the Mitochondrial intermembrane side of the membrane; it reads LAPTPELGGCWPPTGIHPLDPME. Residues 129–152 traverse the membrane as a helical segment; that stretch reads VPLLNTSVLLASGVTITWAHHSLM. Over 153-155 the chain is Mitochondrial matrix; it reads EGN. Residues 156–183 traverse the membrane as a helical segment; it reads RKQMLQALFITISLGIYFTLLQASEYHE. Residues 184–190 are Mitochondrial intermembrane-facing; the sequence is ASFSISD. The helical transmembrane segment at 191-223 threads the bilayer; the sequence is GIYGSTFFMATGFHGLHVIIGSTFLAVCFLRQL. Over 224–232 the chain is Mitochondrial matrix; the sequence is KFHFTSNHH. A helical membrane pass occupies residues 233–256; the sequence is FGFEAAAWYWHFVDVVWLFLYVSI. Topologically, residues 257-261 are mitochondrial intermembrane; the sequence is YWWGS.

It belongs to the cytochrome c oxidase subunit 3 family. In terms of assembly, component of the cytochrome c oxidase (complex IV, CIV), a multisubunit enzyme composed of 14 subunits. The complex is composed of a catalytic core of 3 subunits MT-CO1, MT-CO2 and MT-CO3, encoded in the mitochondrial DNA, and 11 supernumerary subunits COX4I, COX5A, COX5B, COX6A, COX6B, COX6C, COX7A, COX7B, COX7C, COX8 and NDUFA4, which are encoded in the nuclear genome. The complex exists as a monomer or a dimer and forms supercomplexes (SCs) in the inner mitochondrial membrane with NADH-ubiquinone oxidoreductase (complex I, CI) and ubiquinol-cytochrome c oxidoreductase (cytochrome b-c1 complex, complex III, CIII), resulting in different assemblies (supercomplex SCI(1)III(2)IV(1) and megacomplex MCI(2)III(2)IV(2)).

It localises to the mitochondrion inner membrane. It carries out the reaction 4 Fe(II)-[cytochrome c] + O2 + 8 H(+)(in) = 4 Fe(III)-[cytochrome c] + 2 H2O + 4 H(+)(out). Functionally, component of the cytochrome c oxidase, the last enzyme in the mitochondrial electron transport chain which drives oxidative phosphorylation. The respiratory chain contains 3 multisubunit complexes succinate dehydrogenase (complex II, CII), ubiquinol-cytochrome c oxidoreductase (cytochrome b-c1 complex, complex III, CIII) and cytochrome c oxidase (complex IV, CIV), that cooperate to transfer electrons derived from NADH and succinate to molecular oxygen, creating an electrochemical gradient over the inner membrane that drives transmembrane transport and the ATP synthase. Cytochrome c oxidase is the component of the respiratory chain that catalyzes the reduction of oxygen to water. Electrons originating from reduced cytochrome c in the intermembrane space (IMS) are transferred via the dinuclear copper A center (CU(A)) of subunit 2 and heme A of subunit 1 to the active site in subunit 1, a binuclear center (BNC) formed by heme A3 and copper B (CU(B)). The BNC reduces molecular oxygen to 2 water molecules using 4 electrons from cytochrome c in the IMS and 4 protons from the mitochondrial matrix. The protein is Cytochrome c oxidase subunit 3 (MT-CO3) of Dugong dugon (Dugong).